The primary structure comprises 71 residues: Large ribosomal subunit protein uL30 (71 aa).

Belongs to the universal ribosomal protein uL30 family. As to quaternary structure, part of the 50S ribosomal subunit.

The sequence is that of Large ribosomal subunit protein uL30 from Mycolicibacterium paratuberculosis (strain ATCC BAA-968 / K-10) (Mycobacterium paratuberculosis).